A 244-amino-acid chain; its full sequence is 6-carboxyhexanoate--CoA ligase (244 aa).

Belongs to the BioW family. Homodimer. The cofactor is Mg(2+).

The catalysed reaction is heptanedioate + ATP + CoA = 6-carboxyhexanoyl-CoA + AMP + diphosphate. Its pathway is metabolic intermediate metabolism; pimeloyl-CoA biosynthesis; pimeloyl-CoA from pimelate: step 1/1. Catalyzes the transformation of pimelate into pimeloyl-CoA with concomitant hydrolysis of ATP to AMP. The protein is 6-carboxyhexanoate--CoA ligase of Methanococcus maripaludis (strain C7 / ATCC BAA-1331).